The chain runs to 307 residues: UDP-N-acetylenolpyruvoylglucosamine reductase (307 aa).

Residues 33-197 (TGGNADFYIT…LEAAFTLAPG (165 aa)) enclose the FAD-binding PCMH-type domain. Residue Arg176 is part of the active site. Ser226 (proton donor) is an active-site residue. The active site involves Glu296.

It belongs to the MurB family. FAD is required as a cofactor.

It localises to the cytoplasm. The catalysed reaction is UDP-N-acetyl-alpha-D-muramate + NADP(+) = UDP-N-acetyl-3-O-(1-carboxyvinyl)-alpha-D-glucosamine + NADPH + H(+). It participates in cell wall biogenesis; peptidoglycan biosynthesis. Functionally, cell wall formation. The chain is UDP-N-acetylenolpyruvoylglucosamine reductase from Staphylococcus aureus (strain COL).